Consider the following 242-residue polypeptide: Biosynthetic peptidoglycan transglycosylase (242 aa).

A helical membrane pass occupies residues 19 to 39 (ILAALAVFWGGGIALFSVVPV).

The protein belongs to the glycosyltransferase 51 family.

The protein resides in the cell inner membrane. The catalysed reaction is [GlcNAc-(1-&gt;4)-Mur2Ac(oyl-L-Ala-gamma-D-Glu-L-Lys-D-Ala-D-Ala)](n)-di-trans,octa-cis-undecaprenyl diphosphate + beta-D-GlcNAc-(1-&gt;4)-Mur2Ac(oyl-L-Ala-gamma-D-Glu-L-Lys-D-Ala-D-Ala)-di-trans,octa-cis-undecaprenyl diphosphate = [GlcNAc-(1-&gt;4)-Mur2Ac(oyl-L-Ala-gamma-D-Glu-L-Lys-D-Ala-D-Ala)](n+1)-di-trans,octa-cis-undecaprenyl diphosphate + di-trans,octa-cis-undecaprenyl diphosphate + H(+). It participates in cell wall biogenesis; peptidoglycan biosynthesis. In terms of biological role, peptidoglycan polymerase that catalyzes glycan chain elongation from lipid-linked precursors. The protein is Biosynthetic peptidoglycan transglycosylase of Salmonella agona (strain SL483).